A 192-amino-acid polypeptide reads, in one-letter code: UPF0312 protein PSPTO_5071 (192 aa).

The signal sequence occupies residues 1–23; sequence MLKKSLAALALGTALLSAGQAMA.

The protein belongs to the UPF0312 family. Type 1 subfamily.

The protein localises to the periplasm. The sequence is that of UPF0312 protein PSPTO_5071 from Pseudomonas syringae pv. tomato (strain ATCC BAA-871 / DC3000).